Reading from the N-terminus, the 392-residue chain is Chaperone protein DnaJ (392 aa).

The J domain occupies 5-75 (DYYEVLGIDK…QKKQQYDQFG (71 aa)). The segment at 148 to 229 (GVEKTIKYKR…CHGTGTAKET (82 aa)) adopts a CR-type zinc-finger fold. Zn(2+)-binding residues include C161, C164, C177, C180, C203, C206, C217, and C220. CXXCXGXG motif repeat units follow at residues 161 to 168 (CENCHGTG), 177 to 184 (CPTCNGQG), 203 to 210 (CPDCHGTG), and 217 to 224 (CKHCHGTG).

This sequence belongs to the DnaJ family. Homodimer. Zn(2+) is required as a cofactor.

Its subcellular location is the cytoplasm. Participates actively in the response to hyperosmotic and heat shock by preventing the aggregation of stress-denatured proteins and by disaggregating proteins, also in an autonomous, DnaK-independent fashion. Unfolded proteins bind initially to DnaJ; upon interaction with the DnaJ-bound protein, DnaK hydrolyzes its bound ATP, resulting in the formation of a stable complex. GrpE releases ADP from DnaK; ATP binding to DnaK triggers the release of the substrate protein, thus completing the reaction cycle. Several rounds of ATP-dependent interactions between DnaJ, DnaK and GrpE are required for fully efficient folding. Also involved, together with DnaK and GrpE, in the DNA replication of plasmids through activation of initiation proteins. This is Chaperone protein DnaJ from Fusobacterium nucleatum subsp. nucleatum (strain ATCC 25586 / DSM 15643 / BCRC 10681 / CIP 101130 / JCM 8532 / KCTC 2640 / LMG 13131 / VPI 4355).